The chain runs to 331 residues: ADP-L-glycero-D-manno-heptose-6-epimerase (331 aa).

NADP(+)-binding positions include F11–I12, D32–N33, K39, K54, E75–S79, and N92. Catalysis depends on Y139, which acts as the Proton acceptor. K143 serves as a coordination point for NADP(+). Residue N168 participates in substrate binding. Residues V169 and K177 each contribute to the NADP(+) site. Catalysis depends on K177, which acts as the Proton acceptor. Substrate is bound by residues R179, H186, F200–Y203, R213, and Y292.

It belongs to the NAD(P)-dependent epimerase/dehydratase family. HldD subfamily. In terms of assembly, homopentamer. NADP(+) is required as a cofactor.

It catalyses the reaction ADP-D-glycero-beta-D-manno-heptose = ADP-L-glycero-beta-D-manno-heptose. It participates in nucleotide-sugar biosynthesis; ADP-L-glycero-beta-D-manno-heptose biosynthesis; ADP-L-glycero-beta-D-manno-heptose from D-glycero-beta-D-manno-heptose 7-phosphate: step 4/4. Its function is as follows. Catalyzes the interconversion between ADP-D-glycero-beta-D-manno-heptose and ADP-L-glycero-beta-D-manno-heptose via an epimerization at carbon 6 of the heptose. The sequence is that of ADP-L-glycero-D-manno-heptose-6-epimerase from Cupriavidus taiwanensis (strain DSM 17343 / BCRC 17206 / CCUG 44338 / CIP 107171 / LMG 19424 / R1) (Ralstonia taiwanensis (strain LMG 19424)).